A 301-amino-acid polypeptide reads, in one-letter code: Probable alpha-L-glutamate ligase (301 aa).

Residues 104 to 287 (LQLLARKGIG…VATKVIEFIE (184 aa)) enclose the ATP-grasp domain. ATP is bound by residues K141, 178 to 179 (EF), D187, and 211 to 213 (RSN). Residues D248, E260, and N262 each contribute to the Mg(2+) site. Mn(2+)-binding residues include D248, E260, and N262.

The protein belongs to the RimK family. Requires Mg(2+) as cofactor. The cofactor is Mn(2+).

The sequence is that of Probable alpha-L-glutamate ligase from Nitrosococcus oceani (strain ATCC 19707 / BCRC 17464 / JCM 30415 / NCIMB 11848 / C-107).